The following is a 251-amino-acid chain: Hydroxyacylglutathione hydrolase (251 aa).

Positions 53, 55, 57, 58, 110, 127, and 165 each coordinate Zn(2+).

This sequence belongs to the metallo-beta-lactamase superfamily. Glyoxalase II family. Monomer. Requires Zn(2+) as cofactor.

The enzyme catalyses an S-(2-hydroxyacyl)glutathione + H2O = a 2-hydroxy carboxylate + glutathione + H(+). It participates in secondary metabolite metabolism; methylglyoxal degradation; (R)-lactate from methylglyoxal: step 2/2. In terms of biological role, thiolesterase that catalyzes the hydrolysis of S-D-lactoyl-glutathione to form glutathione and D-lactic acid. This Escherichia coli O6:H1 (strain CFT073 / ATCC 700928 / UPEC) protein is Hydroxyacylglutathione hydrolase.